The sequence spans 399 residues: Stearoyl-[acyl-carrier-protein] 9-desaturase, chloroplastic (399 aa).

The span at 1 to 12 shows a compositional bias: polar residues; sequence MALNLNPVSTPF. Residues 1-35 constitute a chloroplast transit peptide; it reads MALNLNPVSTPFQCRRLPSFSPRQTPSRRSPKFFM. A disordered region spans residues 1-57; it reads MALNLNPVSTPFQCRRLPSFSPRQTPSRRSPKFFMASTLSSSSPKEAESLKKPFSPP. The Fe cation site is built by glutamate 141, glutamate 179, histidine 182, glutamate 232, glutamate 265, and histidine 268.

The protein belongs to the fatty acid desaturase type 2 family. Homodimer. Requires Fe(2+) as cofactor.

It is found in the plastid. Its subcellular location is the chloroplast. The catalysed reaction is octadecanoyl-[ACP] + 2 reduced [2Fe-2S]-[ferredoxin] + O2 + 2 H(+) = (9Z)-octadecenoyl-[ACP] + 2 oxidized [2Fe-2S]-[ferredoxin] + 2 H2O. The protein operates within lipid metabolism; fatty acid metabolism. In terms of biological role, converts stearoyl-ACP to oleoyl-ACP by introduction of a cis double bond between carbons 9 and 10 of the acyl chain. This is Stearoyl-[acyl-carrier-protein] 9-desaturase, chloroplastic from Spinacia oleracea (Spinach).